The primary structure comprises 434 residues: N-acylneuraminate cytidylyltransferase (434 aa).

N-acetylmethionine is present on methionine 1. The tract at residues methionine 1–proline 42 is disordered. Positions proline 15–serine 31 match the BC1 motif motif. Omega-N-methylarginine occurs at positions 37 and 52. 6 residues coordinate substrate: arginine 52, asparagine 62, arginine 111, serine 120, serine 122, and glutamine 143. The short motif at lysine 200–aspartate 206 is the BC2 motif element. Arginine 201 is a catalytic residue. A BC3 motif motif is present at residues lysine 269–lysine 276.

Belongs to the CMP-NeuNAc synthase family. Homotetramer; the active enzyme is formed by a dimer of dimers. In terms of tissue distribution, ubiquitously expressed. Expressed in pancreas, kidney, liver, skeletal muscle, lung, placenta, brain, heart, colon, PBL, small intestine, ovary, testis, prostate, thymus and spleen.

It is found in the nucleus. The enzyme catalyses an N-acylneuraminate + CTP = a CMP-N-acyl-beta-neuraminate + diphosphate. It participates in amino-sugar metabolism; N-acetylneuraminate metabolism. Functionally, catalyzes the activation of N-acetylneuraminic acid (NeuNAc) to cytidine 5'-monophosphate N-acetylneuraminic acid (CMP-NeuNAc), a substrate required for the addition of sialic acid. Has some activity toward NeuNAc, N-glycolylneuraminic acid (Neu5Gc) or 2-keto-3-deoxy-D-glycero-D-galacto-nononic acid (KDN). The polypeptide is N-acylneuraminate cytidylyltransferase (CMAS) (Homo sapiens (Human)).